We begin with the raw amino-acid sequence, 188 residues long: ATP synthase subunit delta (188 aa).

It belongs to the ATPase delta chain family. F-type ATPases have 2 components, F(1) - the catalytic core - and F(0) - the membrane proton channel. F(1) has five subunits: alpha(3), beta(3), gamma(1), delta(1), epsilon(1). F(0) has three main subunits: a(1), b(2) and c(10-14). The alpha and beta chains form an alternating ring which encloses part of the gamma chain. F(1) is attached to F(0) by a central stalk formed by the gamma and epsilon chains, while a peripheral stalk is formed by the delta and b chains.

Its subcellular location is the cell inner membrane. Its function is as follows. F(1)F(0) ATP synthase produces ATP from ADP in the presence of a proton or sodium gradient. F-type ATPases consist of two structural domains, F(1) containing the extramembraneous catalytic core and F(0) containing the membrane proton channel, linked together by a central stalk and a peripheral stalk. During catalysis, ATP synthesis in the catalytic domain of F(1) is coupled via a rotary mechanism of the central stalk subunits to proton translocation. In terms of biological role, this protein is part of the stalk that links CF(0) to CF(1). It either transmits conformational changes from CF(0) to CF(1) or is implicated in proton conduction. The sequence is that of ATP synthase subunit delta from Rhizobium meliloti (strain 1021) (Ensifer meliloti).